The chain runs to 203 residues: Ribosomal RNA large subunit methyltransferase E (203 aa).

5 residues coordinate S-adenosyl-L-methionine: G51, W53, D69, D85, and D108. K148 (proton acceptor) is an active-site residue.

The protein belongs to the class I-like SAM-binding methyltransferase superfamily. RNA methyltransferase RlmE family.

Its subcellular location is the cytoplasm. It catalyses the reaction uridine(2552) in 23S rRNA + S-adenosyl-L-methionine = 2'-O-methyluridine(2552) in 23S rRNA + S-adenosyl-L-homocysteine + H(+). In terms of biological role, specifically methylates the uridine in position 2552 of 23S rRNA at the 2'-O position of the ribose in the fully assembled 50S ribosomal subunit. This chain is Ribosomal RNA large subunit methyltransferase E, found in Methanosphaerula palustris (strain ATCC BAA-1556 / DSM 19958 / E1-9c).